The sequence spans 83 residues: MTVGDETAIFDFGNQMPKDIHETLEIVYSSLEEKGYNPINQIVGYLMSGDPAYIPRLNDARNLIKRHERDEIIEELVHAYLKK.

The protein belongs to the UPF0297 family.

This chain is UPF0297 protein LEUM_0557, found in Leuconostoc mesenteroides subsp. mesenteroides (strain ATCC 8293 / DSM 20343 / BCRC 11652 / CCM 1803 / JCM 6124 / NCDO 523 / NBRC 100496 / NCIMB 8023 / NCTC 12954 / NRRL B-1118 / 37Y).